Here is a 333-residue protein sequence, read N- to C-terminus: Protein amalgam (333 aa).

The signal sequence occupies residues 1 to 23; sequence MARLRLLIGLIFCLAISLDSVLS. In terms of domain architecture, Ig-like V-type spans 25–128; sequence PVISQISKDV…VLVSATEKVT (104 aa). Residues Asn-45 and Asn-86 are each glycosylated (N-linked (GlcNAc...) asparagine). 3 disulfides stabilise this stretch: Cys-46–Cys-117, Cys-161–Cys-208, and Cys-251–Cys-307. Ig-like C2-type domains follow at residues 139–223 and 230–323; these read PVIA…RLIR and PQIA…LHLF. An N-linked (GlcNAc...) asparagine glycan is attached at Asn-308.

The protein localises to the cell membrane. In Drosophila melanogaster (Fruit fly), this protein is Protein amalgam (Ama).